A 278-amino-acid polypeptide reads, in one-letter code: Bifunctional protein FolD (278 aa).

NADP(+)-binding positions include 165–167 and Ser190; that span reads GRS.

It belongs to the tetrahydrofolate dehydrogenase/cyclohydrolase family. As to quaternary structure, homodimer.

The enzyme catalyses (6R)-5,10-methylene-5,6,7,8-tetrahydrofolate + NADP(+) = (6R)-5,10-methenyltetrahydrofolate + NADPH. The catalysed reaction is (6R)-5,10-methenyltetrahydrofolate + H2O = (6R)-10-formyltetrahydrofolate + H(+). The protein operates within one-carbon metabolism; tetrahydrofolate interconversion. In terms of biological role, catalyzes the oxidation of 5,10-methylenetetrahydrofolate to 5,10-methenyltetrahydrofolate and then the hydrolysis of 5,10-methenyltetrahydrofolate to 10-formyltetrahydrofolate. In Clostridium tetani (strain Massachusetts / E88), this protein is Bifunctional protein FolD.